The sequence spans 221 residues: ATP phosphoribosyltransferase (221 aa).

This sequence belongs to the ATP phosphoribosyltransferase family. Short subfamily. As to quaternary structure, heteromultimer composed of HisG and HisZ subunits.

The protein resides in the cytoplasm. The enzyme catalyses 1-(5-phospho-beta-D-ribosyl)-ATP + diphosphate = 5-phospho-alpha-D-ribose 1-diphosphate + ATP. Its pathway is amino-acid biosynthesis; L-histidine biosynthesis; L-histidine from 5-phospho-alpha-D-ribose 1-diphosphate: step 1/9. Functionally, catalyzes the condensation of ATP and 5-phosphoribose 1-diphosphate to form N'-(5'-phosphoribosyl)-ATP (PR-ATP). Has a crucial role in the pathway because the rate of histidine biosynthesis seems to be controlled primarily by regulation of HisG enzymatic activity. The polypeptide is ATP phosphoribosyltransferase (Anaeromyxobacter sp. (strain K)).